We begin with the raw amino-acid sequence, 100 residues long: Large ribosomal subunit protein uL23 (100 aa).

This sequence belongs to the universal ribosomal protein uL23 family. As to quaternary structure, part of the 50S ribosomal subunit. Contacts protein L29, and trigger factor when it is bound to the ribosome.

In terms of biological role, one of the early assembly proteins it binds 23S rRNA. One of the proteins that surrounds the polypeptide exit tunnel on the outside of the ribosome. Forms the main docking site for trigger factor binding to the ribosome. This Shewanella piezotolerans (strain WP3 / JCM 13877) protein is Large ribosomal subunit protein uL23.